A 511-amino-acid chain; its full sequence is Ribonuclease Y (511 aa).

A helical membrane pass occupies residues 3–23 (VGILIGIIILGVVGFIQYTLI). One can recognise a KH domain in the interval 201 to 286 (TVHVVALPND…EMVERAIKDV (86 aa)). The 94-residue stretch at 327–420 (VLKHSIEVSY…VQAADAISAA (94 aa)) folds into the HD domain.

The protein belongs to the RNase Y family.

It localises to the cell membrane. In terms of biological role, endoribonuclease that initiates mRNA decay. The polypeptide is Ribonuclease Y (Clostridium perfringens (strain ATCC 13124 / DSM 756 / JCM 1290 / NCIMB 6125 / NCTC 8237 / Type A)).